The sequence spans 142 residues: Large ribosomal subunit protein uL13 (142 aa).

Belongs to the universal ribosomal protein uL13 family. As to quaternary structure, part of the 50S ribosomal subunit.

Functionally, this protein is one of the early assembly proteins of the 50S ribosomal subunit, although it is not seen to bind rRNA by itself. It is important during the early stages of 50S assembly. This Acinetobacter baumannii (strain AB0057) protein is Large ribosomal subunit protein uL13.